We begin with the raw amino-acid sequence, 248 residues long: Triosephosphate isomerase (248 aa).

9–11 provides a ligand contact to substrate; it reads NWK. Catalysis depends on H94, which acts as the Electrophile. E166 serves as the catalytic Proton acceptor. Substrate is bound by residues G172, S212, and 233–234; that span reads GG.

The protein belongs to the triosephosphate isomerase family. In terms of assembly, homodimer.

The protein localises to the cytoplasm. The catalysed reaction is D-glyceraldehyde 3-phosphate = dihydroxyacetone phosphate. It functions in the pathway carbohydrate biosynthesis; gluconeogenesis. Its pathway is carbohydrate degradation; glycolysis; D-glyceraldehyde 3-phosphate from glycerone phosphate: step 1/1. Involved in the gluconeogenesis. Catalyzes stereospecifically the conversion of dihydroxyacetone phosphate (DHAP) to D-glyceraldehyde-3-phosphate (G3P). This Clostridium botulinum (strain Eklund 17B / Type B) protein is Triosephosphate isomerase.